The primary structure comprises 891 residues: Alanine--tRNA ligase (891 aa).

4 residues coordinate Zn(2+): histidine 564, histidine 568, cysteine 678, and histidine 682.

This sequence belongs to the class-II aminoacyl-tRNA synthetase family. The cofactor is Zn(2+).

It localises to the cytoplasm. It catalyses the reaction tRNA(Ala) + L-alanine + ATP = L-alanyl-tRNA(Ala) + AMP + diphosphate. In terms of biological role, catalyzes the attachment of alanine to tRNA(Ala) in a two-step reaction: alanine is first activated by ATP to form Ala-AMP and then transferred to the acceptor end of tRNA(Ala). Also edits incorrectly charged Ser-tRNA(Ala) and Gly-tRNA(Ala) via its editing domain. This chain is Alanine--tRNA ligase, found in Nitrobacter hamburgensis (strain DSM 10229 / NCIMB 13809 / X14).